A 421-amino-acid polypeptide reads, in one-letter code: MAETVSSAARDAPSREGWTDSDSPEQEEVGDDAELLQCQLQLGTPREMENAELVAEVEAVAAGWMLDFLCLSLCRAFRDGRSEDFRRTRDSAEAIIHGLHRLTAYQLKTVYICQFLTRVASGKALDAQFEVDERITPLESALMIWNSIEKEHDKLHDEIKNLIKIQAVAVCMEIGSFKEAEEVFERIFGDPEFYTPLERKLLKIISQKDVFHSLFQHFSYSCMMEKIQSYVGDVLSEKSSTFLMKAATKVVENEKARTQASKDRPDATNTGMDTEVGLNKEKSVNGQQSTETEPLVDTVSSIRSHKNALSQLKHRRAPSDFSRNEARTGTLQCETTMERNRRTSGRNRLCVSENQPDTDDKSGRRKRQTWLWEEDRILKCGVKKYGEGNWAKILSHYKFNNRTSVMLKDRWRTMKRLKLIS.

Residues 1-30 are disordered; the sequence is MAETVSSAARDAPSREGWTDSDSPEQEEVG. Residue Ala-2 is modified to N-acetylalanine. The segment at 49–255 is TRFH mediates dimerization; it reads ENAELVAEVE…AATKVVENEK (207 aa). Lys-200 is covalently cross-linked (Glycyl lysine isopeptide (Lys-Gly) (interchain with G-Cter in SUMO2)). Ser-206 carries the phosphoserine; by ATM modification. Residues 252–365 are interaction with RLIM; it reads ENEKARTQAS…PDTDDKSGRR (114 aa). Positions 253-266 are enriched in basic and acidic residues; it reads NEKARTQASKDRPD. The segment at 253-366 is disordered; the sequence is NEKARTQASK…DTDDKSGRRK (114 aa). A compositionally biased stretch (polar residues) spans 284 to 310; that stretch reads VNGQQSTETEPLVDTVSSIRSHKNALS. Residues 313-367 carry the Nuclear localization signal motif; the sequence is KHRRAPSDFSRNEARTGTLQCETTMERNRRTSGRNRLCVSENQPDTDDKSGRRKR. The HTH myb-type domain maps to 362-419; the sequence is SGRRKRQTWLWEEDRILKCGVKKYGEGNWAKILSHYKFNNRTSVMLKDRWRTMKRLKL. The H-T-H motif DNA-binding region spans 390-415; the sequence is WAKILSHYKFNNRTSVMLKDRWRTMK.

In terms of assembly, homodimer; can contain both isoforms. Found in a complex with POT1; TINF2 and TNKS1. Interacts with ATM, TINF2, TNKS1, TNKS2, PINX1, NEK2 and MAPRE1. Component of the shelterin complex (telosome) composed of TERF1, TERF2, TINF2, TERF2IP ACD and POT1. Interacts with RLIM (via N-terminus). Interacts with FBXO4. Interaction with TINF2 protects against interaction with FBXO4 and subsequent polyubiquitination and proteasomal degradation. Interacts with GNL3L; this interaction promotes homodimerization. Interacts with TIN2. Interactions with GNL3L and TIN2 are mutually exclusive. Interacts with RTEL1. Interacts with CCDC79/TERB1. Phosphorylated preferentially on Ser-219 in an ATM-dependent manner in response to ionizing DNA damage. In terms of processing, ADP-ribosylation by TNKS1 or TNKS2 diminishes its ability to bind to telomeric DNA. Post-translationally, ubiquitinated by RLIM/RNF12, leading to its degradation by the proteasome. Ubiquitinated by a SCF (SKP1-CUL1-F-box protein) ubiquitin-protein ligase complex, leading to its degradation by the proteasome.

The protein localises to the nucleus. The protein resides in the chromosome. It localises to the telomere. Its subcellular location is the cytoplasm. It is found in the cytoskeleton. The protein localises to the spindle. Its function is as follows. Binds the telomeric double-stranded 5'-TTAGGG-3' repeat and negatively regulates telomere length. Involved in the regulation of the mitotic spindle. Component of the shelterin complex (telosome) that is involved in the regulation of telomere length and protection. Shelterin associates with arrays of double-stranded 5'-TTAGGG-3' repeats added by telomerase and protects chromosome ends; without its protective activity, telomeres are no longer hidden from the DNA damage surveillance and chromosome ends are inappropriately processed by DNA repair pathways. This is Telomeric repeat-binding factor 1 (Terf1) from Mus musculus (Mouse).